Here is a 283-residue protein sequence, read N- to C-terminus: Thymidylate synthase (283 aa).

Residue Arg-22 coordinates dUMP. The Nucleophile role is filled by Cys-160. Residues 180–183 (RSCD), Asn-191, and 221–223 (HIY) each bind dUMP. Asp-183 is a (6R)-5,10-methylene-5,6,7,8-tetrahydrofolate binding site. Residue Ser-282 coordinates (6R)-5,10-methylene-5,6,7,8-tetrahydrofolate.

Belongs to the thymidylate synthase family. Bacterial-type ThyA subfamily. As to quaternary structure, homodimer.

The protein localises to the cytoplasm. The enzyme catalyses dUMP + (6R)-5,10-methylene-5,6,7,8-tetrahydrofolate = 7,8-dihydrofolate + dTMP. Its pathway is pyrimidine metabolism; dTTP biosynthesis. In terms of biological role, catalyzes the reductive methylation of 2'-deoxyuridine-5'-monophosphate (dUMP) to 2'-deoxythymidine-5'-monophosphate (dTMP) while utilizing 5,10-methylenetetrahydrofolate (mTHF) as the methyl donor and reductant in the reaction, yielding dihydrofolate (DHF) as a by-product. This enzymatic reaction provides an intracellular de novo source of dTMP, an essential precursor for DNA biosynthesis. In Shewanella pealeana (strain ATCC 700345 / ANG-SQ1), this protein is Thymidylate synthase.